The primary structure comprises 326 residues: Olfactory receptor 8A1 (326 aa).

The Extracellular portion of the chain corresponds to 1–45; that stretch reads MGFLSPMHPCRPPTQRRMAAGNHSTVTEFILKGLTKRADLQLPLF. An N-linked (GlcNAc...) asparagine glycan is attached at N22. A helical transmembrane segment spans residues 46–66; sequence LLFLGIYLVTIVGNLGMITLI. At 67–77 the chain is on the cytoplasmic side; sequence CLNSQLHTPMY. A helical membrane pass occupies residues 78–100; the sequence is YFLSNLSLMDLCYSSVITPKMLV. The Extracellular portion of the chain corresponds to 101 to 116; it reads NFVSEKNIISYAGCMS. C114 and C195 form a disulfide bridge. The chain crosses the membrane as a helical span at residues 117-137; that stretch reads QLYFFLVFVIAECYMLTVMAY. Over 138–150 the chain is Cytoplasmic; the sequence is DRYVAICHPLLYN. Residues 151–171 form a helical membrane-spanning segment; sequence IIMSHHTCLLLVAVVYAIGLI. Over 172–222 the chain is Extracellular; sequence GSTIETGLMLKLPYCEHLISHYFCDILPLMKLSCSSTYDVEMTVFFSAGFN. A helical membrane pass occupies residues 223–243; sequence IIVTSLTVLVSYTFILSSILG. The Cytoplasmic portion of the chain corresponds to 244 to 260; the sequence is ISTTEGRSKAFSTCSSH. The helical transmembrane segment at 261 to 281 threads the bilayer; the sequence is LAAVGMFYGSTAFMYLKPSTI. Over 282 to 287 the chain is Extracellular; it reads SSLTQE. The chain crosses the membrane as a helical span at residues 288-308; that stretch reads NVASVFYTTVIPMLNPLIYSL. At 309–326 the chain is on the cytoplasmic side; the sequence is RNKEVKAAVQKTLRGKLF.

This sequence belongs to the G-protein coupled receptor 1 family.

The protein localises to the cell membrane. In terms of biological role, odorant receptor. In Homo sapiens (Human), this protein is Olfactory receptor 8A1 (OR8A1).